The chain runs to 244 residues: Thiol S-methyltransferase TMT1A (244 aa).

The tract at residues 1 to 28 (MELTIFILRLAIYILTFPLYLLNFLGLW) is targeting to lipid droplets. The first 29 residues, 1-29 (MELTIFILRLAIYILTFPLYLLNFLGLWS), serve as a signal peptide directing secretion.

Belongs to the methyltransferase superfamily. As to quaternary structure, (Microbial infection) Interacts with HCV non-structural protein 4B/NS4B (via C-terminal region); this interaction may promote the recruitment of NS4B in the proximity of lipid droplet. Self-associates. Interacts with SNRNP200; this interaction may promote the odontogenic differentiation. Methylated at lysine residues most likely by EZH2. As to expression, expressed in the liver.

It is found in the lipid droplet. It localises to the endoplasmic reticulum. The protein resides in the membrane. Its subcellular location is the microsome. The protein localises to the cytoplasm. It is found in the cytosol. It carries out the reaction a thiol + S-adenosyl-L-methionine = a methyl thioether + S-adenosyl-L-homocysteine + H(+). The catalysed reaction is an adenosine in mRNA + S-adenosyl-L-methionine = an N(6)-methyladenosine in mRNA + S-adenosyl-L-homocysteine + H(+). Its activity is regulated as follows. Inhibited by 2,3-dichloro-alpha-methylbenzylamine (DCMB). Its function is as follows. Thiol S-methyltransferase that catalyzes the transfer of a methyl group from S-adenosyl-L-methionine to alkyl and phenolic thiol-containing acceptor substrates. Together with TMT1B accounts for most of S-thiol methylation activity in the endoplasmic reticulum of hepatocytes. Able to methylate the N6 position of adenosine residues in long non-coding RNAs (lncRNAs). May facilitate lncRNAs transfer into exosomes at the tumor-stroma interface. Promotes osteogenic and odontogenic differentiation by regulating the expression of genes involved in stem cell differentiation and survival. Targeted from the endoplasmic reticulum to lipid droplets, where it recruits cellular proteins to form functional organelles. In terms of biological role, (Microbial infection) May be involved in the assembly and release stages of hepatitis C virus (HCV) life cycle and thus play a crucial role in HCV propagation. This is Thiol S-methyltransferase TMT1A from Homo sapiens (Human).